A 219-amino-acid polypeptide reads, in one-letter code: Ribose-5-phosphate isomerase A (219 aa).

Residues 28–31 (TGST), 81–84 (DSAD), and 94–97 (KGGG) contribute to the substrate site. Catalysis depends on E103, which acts as the Proton acceptor. K121 provides a ligand contact to substrate.

It belongs to the ribose 5-phosphate isomerase family. Homodimer.

The catalysed reaction is aldehydo-D-ribose 5-phosphate = D-ribulose 5-phosphate. Its pathway is carbohydrate degradation; pentose phosphate pathway; D-ribose 5-phosphate from D-ribulose 5-phosphate (non-oxidative stage): step 1/1. Functionally, catalyzes the reversible conversion of ribose-5-phosphate to ribulose 5-phosphate. This chain is Ribose-5-phosphate isomerase A, found in Buchnera aphidicola subsp. Schizaphis graminum (strain Sg).